Reading from the N-terminus, the 487-residue chain is 2-aminomuconic semialdehyde dehydrogenase (487 aa).

231 to 236 (GSTATA) contacts NAD(+). Glutamate 253 acts as the Proton acceptor in catalysis. Residue cysteine 287 is the Nucleophile of the active site.

This sequence belongs to the aldehyde dehydrogenase family.

The protein resides in the cytoplasm. It catalyses the reaction 2-aminomuconate 6-semialdehyde + NAD(+) + H2O = (2Z,4E)-2-aminomuconate + NADH + 2 H(+). It participates in amino-acid degradation; L-kynurenine degradation. Its function is as follows. Catalyzes the NAD-dependent oxidation of 2-aminomuconic semialdehyde of the kynurenine metabolic pathway in L-tryptophan degradation. This is 2-aminomuconic semialdehyde dehydrogenase (aldh8a1) from Danio rerio (Zebrafish).